The following is a 238-amino-acid chain: tRNA1(Val) (adenine(37)-N6)-methyltransferase (238 aa).

It belongs to the methyltransferase superfamily. tRNA (adenine-N(6)-)-methyltransferase family.

The protein localises to the cytoplasm. It catalyses the reaction adenosine(37) in tRNA1(Val) + S-adenosyl-L-methionine = N(6)-methyladenosine(37) in tRNA1(Val) + S-adenosyl-L-homocysteine + H(+). Functionally, specifically methylates the adenine in position 37 of tRNA(1)(Val) (anticodon cmo5UAC). This is tRNA1(Val) (adenine(37)-N6)-methyltransferase from Shewanella baltica (strain OS195).